A 392-amino-acid polypeptide reads, in one-letter code: Branched-chain-amino-acid aminotransferase, mitochondrial (392 aa).

A mitochondrion-targeting transit peptide spans Met1–Tyr27. Tyr168 contacts substrate. The residue at position 229 (Lys229) is an N6-(pyridoxal phosphate)lysine. Lys321 is subject to N6-acetyllysine.

Belongs to the class-IV pyridoxal-phosphate-dependent aminotransferase family. As to quaternary structure, homodimer. Pyridoxal 5'-phosphate is required as a cofactor.

It localises to the mitochondrion. It carries out the reaction L-leucine + 2-oxoglutarate = 4-methyl-2-oxopentanoate + L-glutamate. It catalyses the reaction L-isoleucine + 2-oxoglutarate = (S)-3-methyl-2-oxopentanoate + L-glutamate. The catalysed reaction is L-valine + 2-oxoglutarate = 3-methyl-2-oxobutanoate + L-glutamate. In terms of biological role, catalyzes the first reaction in the catabolism of the essential branched chain amino acids leucine, isoleucine, and valine. May also function as a transporter of branched chain alpha-keto acids. In Pongo abelii (Sumatran orangutan), this protein is Branched-chain-amino-acid aminotransferase, mitochondrial (BCAT2).